Consider the following 63-residue polypeptide: Large ribosomal subunit protein bL35 (63 aa).

This sequence belongs to the bacterial ribosomal protein bL35 family.

This is Large ribosomal subunit protein bL35 from Sulfurimonas denitrificans (strain ATCC 33889 / DSM 1251) (Thiomicrospira denitrificans (strain ATCC 33889 / DSM 1251)).